The sequence spans 253 residues: 5'-nucleotidase SurE (253 aa).

A divalent metal cation is bound by residues Asp-8, Asp-9, Ser-39, and Asn-95.

The protein belongs to the SurE nucleotidase family. Requires a divalent metal cation as cofactor.

Its subcellular location is the cytoplasm. It carries out the reaction a ribonucleoside 5'-phosphate + H2O = a ribonucleoside + phosphate. Nucleotidase that shows phosphatase activity on nucleoside 5'-monophosphates. This Desulfatibacillum aliphaticivorans protein is 5'-nucleotidase SurE.